The primary structure comprises 505 residues: Ion-translocating oxidoreductase complex subunit C (505 aa).

2 4Fe-4S ferredoxin-type domains span residues 381–410 (ELNNFEEKNCIRCAACSYSCPMNLLPEQLY) and 420–449 (KTQIYNIQDCIECGICEQVCPSDIPLMSYY). [4Fe-4S] cluster is bound by residues C390, C393, C396, C400, C429, C432, C435, and C439.

This sequence belongs to the 4Fe4S bacterial-type ferredoxin family. RnfC subfamily. The complex is composed of six subunits: RnfA, RnfB, RnfC, RnfD, RnfE and RnfG. The cofactor is [4Fe-4S] cluster.

Its subcellular location is the cell inner membrane. Part of a membrane-bound complex that couples electron transfer with translocation of ions across the membrane. The sequence is that of Ion-translocating oxidoreductase complex subunit C from Buchnera aphidicola subsp. Baizongia pistaciae (strain Bp).